An 886-amino-acid polypeptide reads, in one-letter code: Alanine--tRNA ligase (886 aa).

The Zn(2+) site is built by His-570, His-574, Cys-673, and His-677.

It belongs to the class-II aminoacyl-tRNA synthetase family. Zn(2+) serves as cofactor.

The protein localises to the cytoplasm. It carries out the reaction tRNA(Ala) + L-alanine + ATP = L-alanyl-tRNA(Ala) + AMP + diphosphate. Its function is as follows. Catalyzes the attachment of alanine to tRNA(Ala) in a two-step reaction: alanine is first activated by ATP to form Ala-AMP and then transferred to the acceptor end of tRNA(Ala). Also edits incorrectly charged Ser-tRNA(Ala) and Gly-tRNA(Ala) via its editing domain. The protein is Alanine--tRNA ligase of Chlorobium chlorochromatii (strain CaD3).